We begin with the raw amino-acid sequence, 334 residues long: Aspartate carbamoyltransferase catalytic subunit (334 aa).

Residues Arg-71 and Thr-72 each coordinate carbamoyl phosphate. Lys-99 contributes to the L-aspartate binding site. Residues Arg-121, His-151, and Gln-154 each coordinate carbamoyl phosphate. The L-aspartate site is built by Arg-184 and Arg-239. The carbamoyl phosphate site is built by Gly-280 and Pro-281.

The protein belongs to the aspartate/ornithine carbamoyltransferase superfamily. ATCase family. As to quaternary structure, heterododecamer (2C3:3R2) of six catalytic PyrB chains organized as two trimers (C3), and six regulatory PyrI chains organized as three dimers (R2).

The enzyme catalyses carbamoyl phosphate + L-aspartate = N-carbamoyl-L-aspartate + phosphate + H(+). Its pathway is pyrimidine metabolism; UMP biosynthesis via de novo pathway; (S)-dihydroorotate from bicarbonate: step 2/3. Catalyzes the condensation of carbamoyl phosphate and aspartate to form carbamoyl aspartate and inorganic phosphate, the committed step in the de novo pyrimidine nucleotide biosynthesis pathway. The polypeptide is Aspartate carbamoyltransferase catalytic subunit (Pseudomonas savastanoi pv. phaseolicola (strain 1448A / Race 6) (Pseudomonas syringae pv. phaseolicola (strain 1448A / Race 6))).